The chain runs to 668 residues: Protein brown (668 aa).

Topologically, residues 1–412 (MPMDEGDAQG…TEDLANIRSG (412 aa)) are cytoplasmic. The region spanning 31–328 (YSFWNECRKQ…FTEGFMQPKN (298 aa)) is the ABC transporter domain. An ATP-binding site is contributed by 63-70 (GGSGAGKT). The chain crosses the membrane as a helical span at residues 413 to 433 (LIGFGFFMTTAVTLSLMYSGV). Residues 434-453 (GGLTQRTVQDVGGSIFMLSN) lie on the Extracellular side of the membrane. The chain crosses the membrane as a helical span at residues 454–474 (EMIFTFSYGVTYIFPAALPII). Over 475–490 (RREVAEGTYSLSAYYV) the chain is Cytoplasmic. The chain crosses the membrane as a helical span at residues 491 to 511 (ALVLSFVPVAFFKGYMFLSVI). Residues 512-524 (YASIYYTRGFLLY) are Extracellular-facing. The helical transmembrane segment at 525–545 (ITMGFLMSLSAIAAVGYGVFL) threads the bilayer. The Cytoplasmic portion of the chain corresponds to 546–561 (SSLFETDKMASECAAP). A helical transmembrane segment spans residues 562-582 (FDLIFLIFGGTYMNVDSVPLL). The Extracellular segment spans residues 583 to 637 (KYFSLFFYSNEALMYNFWIDIDNIACXVNDEHPCCQTGLEVLQQASFRTADYTFW). Residues 638–658 (LDCASLLVVALVFHIVSFTLI) form a helical membrane-spanning segment. The Cytoplasmic portion of the chain corresponds to 659-668 (RRYINRSGYY).

The protein belongs to the ABC transporter superfamily. ABCG family. Eye pigment precursor importer (TC 3.A.1.204) subfamily. As to quaternary structure, may form a heterodimer with w/white. As to expression, expressed in eyes.

The protein localises to the membrane. The enzyme catalyses guanine(out) + ATP + H2O = guanine(in) + ADP + phosphate + H(+). The catalysed reaction is riboflavin(in) + ATP + H2O = riboflavin(out) + ADP + phosphate + H(+). It carries out the reaction (6S)-5,6,7,8-tetrahydrofolate(out) + ATP + H2O = (6S)-5,6,7,8-tetrahydrofolate(in) + ADP + phosphate + H(+). Functionally, ATP-dependent transporter of the ATP-binding cassette (ABC) family which transports various molecules including bioamines, neurotransmitters and metabolic intermediates. In the eye and probably in association with w/white, required for the transport of the eye red pigment precursor, guanine, into pigment cell granules. In Malpighian tubules, involved in guanine uptake. Probably in association with w/white, involved in aging-induced intestinal stem cell proliferation in the midgut by regulating tetrahydrofolate transport. This is Protein brown from Drosophila virilis (Fruit fly).